A 306-amino-acid chain; its full sequence is D-alanine--D-alanine ligase B (306 aa).

In terms of domain architecture, ATP-grasp spans 101–303 (KLLWQGAGLP…FSQLVVRILE (203 aa)). ATP is bound at residue 134-189 (ISALGLPLIVKPSREGSSVGMTKVVEENALQGALSLAFQHDDEILIEKWLCGPEFT). Asp257, Glu270, and Asn272 together coordinate Mg(2+).

This sequence belongs to the D-alanine--D-alanine ligase family. Monomer. It depends on Mg(2+) as a cofactor. Mn(2+) serves as cofactor.

The protein resides in the cytoplasm. It catalyses the reaction 2 D-alanine + ATP = D-alanyl-D-alanine + ADP + phosphate + H(+). It participates in cell wall biogenesis; peptidoglycan biosynthesis. Its function is as follows. Cell wall formation. The protein is D-alanine--D-alanine ligase B (ddlB) of Salmonella typhimurium (strain LT2 / SGSC1412 / ATCC 700720).